A 129-amino-acid polypeptide reads, in one-letter code: Follitropin subunit beta (129 aa).

The signal sequence occupies residues 1 to 18 (MKSVQFCFLFCCWKAICC). Cystine bridges form between Cys-21/Cys-69, Cys-35/Cys-84, Cys-38/Cys-122, Cys-46/Cys-100, Cys-50/Cys-102, and Cys-105/Cys-112. Residues Asn-25 and Asn-42 are each glycosylated (N-linked (GlcNAc...) asparagine).

It belongs to the glycoprotein hormones subunit beta family. In terms of assembly, heterodimer. The active follitropin is a heterodimer composed of an alpha chain/CGA shared with other hormones and a unique beta chain/FSHB shown here.

Its subcellular location is the secreted. Its function is as follows. Together with the alpha chain CGA constitutes follitropin, the follicle-stimulating hormone, and provides its biological specificity to the hormone heterodimer. Binds FSHR, a G protein-coupled receptor, on target cells to activate downstream signaling pathways. Follitropin is involved in follicle development and spermatogenesis in reproductive organs. The polypeptide is Follitropin subunit beta (FSHB) (Oryctolagus cuniculus (Rabbit)).